The following is a 219-amino-acid chain: Pyridoxine/pyridoxamine 5'-phosphate oxidase (219 aa).

Substrate contacts are provided by residues 15–18 and K73; that span reads RRDY. FMN contacts are provided by residues 68–73, 83–84, R89, K90, and Q112; these read RMVLLK and YT. Positions 130, 134, and 138 each coordinate substrate. Residues 147 to 148 and W192 each bind FMN; that span reads QS. Residue 198 to 200 participates in substrate binding; that stretch reads RLH. R202 lines the FMN pocket.

This sequence belongs to the pyridoxamine 5'-phosphate oxidase family. Homodimer. FMN serves as cofactor.

The enzyme catalyses pyridoxamine 5'-phosphate + O2 + H2O = pyridoxal 5'-phosphate + H2O2 + NH4(+). It carries out the reaction pyridoxine 5'-phosphate + O2 = pyridoxal 5'-phosphate + H2O2. The protein operates within cofactor metabolism; pyridoxal 5'-phosphate salvage; pyridoxal 5'-phosphate from pyridoxamine 5'-phosphate: step 1/1. Its pathway is cofactor metabolism; pyridoxal 5'-phosphate salvage; pyridoxal 5'-phosphate from pyridoxine 5'-phosphate: step 1/1. In terms of biological role, catalyzes the oxidation of either pyridoxine 5'-phosphate (PNP) or pyridoxamine 5'-phosphate (PMP) into pyridoxal 5'-phosphate (PLP). The polypeptide is Pyridoxine/pyridoxamine 5'-phosphate oxidase (Acaryochloris marina (strain MBIC 11017)).